A 305-amino-acid chain; its full sequence is Hydrogen peroxide-inducible genes activator (305 aa).

One can recognise an HTH lysR-type domain in the interval 1–58; it reads MNIRDLEYLVALAEHRHFRRAADSCHVSQPTLSGQIRKLEDELGVMLLERTSRKVLFT. Residues 18–37 constitute a DNA-binding region (H-T-H motif); the sequence is FRRAADSCHVSQPTLSGQIR. 2 cysteine pairs are disulfide-bonded: Cys-180/Cys-259 and Cys-199/Cys-208. At Cys-199 the chain carries Cysteine sulfenic acid (-SOH); alternate. An S-glutathionyl cysteine; alternate modification is found at Cys-199. Cys-199 is modified (S-nitrosocysteine; alternate).

The protein belongs to the LysR transcriptional regulatory family. As to quaternary structure, homodimer and homotetramer. Oxidized on Cys-199; the Cys-SOH formed in response to oxidative signaling triggers a conformational change and the onset of transcriptional activity with a specific DNA-binding affinity. Cys-199-SOH rapidly reacts with Cys-208-SH to form a disulfide bond. Post-translationally, S-nitrosylation in response to nitrosative signaling triggers a conformational change and the onset of transcriptional activity with a specific DNA-binding affinity. In terms of processing, glutathionylation in response to redox signaling triggers the onset of transcriptional activity with a specific DNA-binding affinity.

Its activity is regulated as follows. Activated by oxidation of Cys-199 resulting in the alternative formation of cystine, sulfenic acid, S-nitroso- or glutathione-bound cysteine. In terms of biological role, hydrogen peroxide sensor. Activates the expression of a regulon of hydrogen peroxide-inducible genes such as katG, gor, ahpC, ahpF, oxyS (a regulatory RNA), dps, fur and grxA. OxyR expression is negatively autoregulated by binding to a 43 bp region upstream of its own coding sequence. OxyR is inactivated by reduction of its essential disulfide bond by the product of GrxA, itself positively regulated by OxyR. Also has a positive regulatory effect on the production of surface proteins that control the colony morphology and auto-aggregation ability. The protein is Hydrogen peroxide-inducible genes activator (oxyR) of Escherichia coli O157:H7.